Consider the following 518-residue polypeptide: Glutamate--cysteine ligase (518 aa).

This sequence belongs to the glutamate--cysteine ligase type 1 family. Type 1 subfamily.

It carries out the reaction L-cysteine + L-glutamate + ATP = gamma-L-glutamyl-L-cysteine + ADP + phosphate + H(+). The protein operates within sulfur metabolism; glutathione biosynthesis; glutathione from L-cysteine and L-glutamate: step 1/2. This is Glutamate--cysteine ligase from Shigella dysenteriae serotype 1 (strain Sd197).